The chain runs to 165 residues: MPLNKESKQAVVAEVSAQVAKAQTVVLAEYRGITVGDLTKLRAKAREQQVYLRVLKNTLARRAVEGTPFAPLAEQMTGPLIYGISEDAIAAAKVVNDFSKSNDKLIIKAGSYEGKVMDKAGVQALANIPSREELLSKLLFVMQAPVSGFARALAALAEKKQGEAA.

It belongs to the universal ribosomal protein uL10 family. In terms of assembly, part of the ribosomal stalk of the 50S ribosomal subunit. The N-terminus interacts with L11 and the large rRNA to form the base of the stalk. The C-terminus forms an elongated spine to which L12 dimers bind in a sequential fashion forming a multimeric L10(L12)X complex.

In terms of biological role, forms part of the ribosomal stalk, playing a central role in the interaction of the ribosome with GTP-bound translation factors. The polypeptide is Large ribosomal subunit protein uL10 (Paraburkholderia phymatum (strain DSM 17167 / CIP 108236 / LMG 21445 / STM815) (Burkholderia phymatum)).